The primary structure comprises 484 residues: UDP-N-acetylmuramate--L-alanine ligase (484 aa).

122–128 lines the ATP pocket; sequence GTHGKTT.

It belongs to the MurCDEF family.

The protein localises to the cytoplasm. The catalysed reaction is UDP-N-acetyl-alpha-D-muramate + L-alanine + ATP = UDP-N-acetyl-alpha-D-muramoyl-L-alanine + ADP + phosphate + H(+). The protein operates within cell wall biogenesis; peptidoglycan biosynthesis. Its function is as follows. Cell wall formation. This chain is UDP-N-acetylmuramate--L-alanine ligase, found in Mycobacterium sp. (strain JLS).